Here is a 214-residue protein sequence, read N- to C-terminus: Probable chorismate pyruvate-lyase (214 aa).

3 residues coordinate substrate: R74, L112, and E173. Residues 183 to 214 form a disordered region; it reads AAPENTGAGGTRLPRRIDTHHTPSKQEERPES. The segment covering 197 to 214 has biased composition (basic and acidic residues); sequence RRIDTHHTPSKQEERPES.

Belongs to the UbiC family.

It is found in the cytoplasm. The enzyme catalyses chorismate = 4-hydroxybenzoate + pyruvate. The protein operates within cofactor biosynthesis; ubiquinone biosynthesis. Its function is as follows. Removes the pyruvyl group from chorismate, with concomitant aromatization of the ring, to provide 4-hydroxybenzoate (4HB) for the ubiquinone pathway. This is Probable chorismate pyruvate-lyase from Cupriavidus metallidurans (strain ATCC 43123 / DSM 2839 / NBRC 102507 / CH34) (Ralstonia metallidurans).